An 89-amino-acid chain; its full sequence is UPF0367 protein CYA_1023 (89 aa).

Residues 69-89 (TKSGGPGAPGTRPGFLAQLQG) form a disordered region.

It belongs to the UPF0367 family.

The chain is UPF0367 protein CYA_1023 from Synechococcus sp. (strain JA-3-3Ab) (Cyanobacteria bacterium Yellowstone A-Prime).